Consider the following 75-residue polypeptide: RNA-binding protein Hfq (75 aa).

Residues 9 to 69 (DQFLNQLRKE…ISTFAPERNI (61 aa)) form the Sm domain.

This sequence belongs to the Hfq family. In terms of assembly, homohexamer.

Functionally, RNA chaperone that binds small regulatory RNA (sRNAs) and mRNAs to facilitate mRNA translational regulation in response to envelope stress, environmental stress and changes in metabolite concentrations. Also binds with high specificity to tRNAs. The sequence is that of RNA-binding protein Hfq from Geobacillus kaustophilus (strain HTA426).